Consider the following 90-residue polypeptide: Small ribosomal subunit protein bS16 (90 aa).

This sequence belongs to the bacterial ribosomal protein bS16 family.

The protein is Small ribosomal subunit protein bS16 of Brevibacillus brevis (strain 47 / JCM 6285 / NBRC 100599).